Here is a 201-residue protein sequence, read N- to C-terminus: Peptide deformylase (201 aa).

Cys-114 and His-156 together coordinate Fe cation. Residue Glu-157 is part of the active site. Residue His-160 coordinates Fe cation.

The protein belongs to the polypeptide deformylase family. The cofactor is Fe(2+).

It catalyses the reaction N-terminal N-formyl-L-methionyl-[peptide] + H2O = N-terminal L-methionyl-[peptide] + formate. In terms of biological role, removes the formyl group from the N-terminal Met of newly synthesized proteins. Requires at least a dipeptide for an efficient rate of reaction. N-terminal L-methionine is a prerequisite for activity but the enzyme has broad specificity at other positions. The polypeptide is Peptide deformylase (Tropheryma whipplei (strain TW08/27) (Whipple's bacillus)).